The following is a 194-amino-acid chain: E3 ubiquitin-protein ligase RNF4 (194 aa).

Residues 1–12 (MSTRNPQRKRRG) show a composition bias toward basic residues. The segment at 1–20 (MSTRNPQRKRRGGAVNSRQT) is required for ubiquitination activity. The disordered stretch occupies residues 1 to 36 (MSTRNPQRKRRGGAVNSRQTQKRTRETTSTPEISLE). Positions 6–65 (PQRKRRGGAVNSRQTQKRTRETTSTPEISLEAEPIELVETVGDEIVDLTCESLEPVVVDL) are mediates interaction with TRPS1. 4 short sequence motifs (SUMO interaction motif) span residues 40–43 (IELV), 50–53 (IVDL), 61–63 (VVV), and 71–74 (VVIV). Ser98 and Ser99 each carry phosphoserine. Residues Cys136, Cys139, Cys158, His160, Cys163, Cys166, Cys177, and Cys180 each contribute to the Zn(2+) site. An RING-type zinc finger spans residues 136-181 (CPICMDGYSEIVQNGRLIVSTECGHVFCSQCLRDSLKNANTCPTCR).

As to quaternary structure, homodimer (via RING-type zinc finger domain). Interacts with GSC2. Interacts with AR/the androgen receptor and TBP. Interacts with TCF20. Interacts with PATZ1. Interacts with TRPS1; negatively regulates TRPS1 transcriptional repressor activity. Interacts with PML (isoform PML-1, isoform PML-2, isoform PML-3, isoform PML-4, isoform PML-5 and isoform PML-6). Interacts with PRDM1/Blimp-1. Post-translationally, sumoylated; conjugated by one or two SUMO1 moieties. In terms of processing, autoubiquitinated. Widely expressed with highest levels in testis.

The protein resides in the cytoplasm. The protein localises to the nucleus. It is found in the nucleoplasm. It localises to the PML body. It catalyses the reaction S-ubiquitinyl-[E2 ubiquitin-conjugating enzyme]-L-cysteine + [acceptor protein]-L-lysine = [E2 ubiquitin-conjugating enzyme]-L-cysteine + N(6)-ubiquitinyl-[acceptor protein]-L-lysine.. It participates in protein modification; protein ubiquitination. Its function is as follows. E3 ubiquitin-protein ligase which binds polysumoylated chains covalently attached to proteins and mediates 'Lys-6'-, 'Lys-11'-, 'Lys-48'- and 'Lys-63'-linked polyubiquitination of those substrates and their subsequent targeting to the proteasome for degradation. Regulates the degradation of several proteins including PML and the transcriptional activator PEA3. Involved in chromosome alignment and spindle assembly, it regulates the kinetochore CENPH-CENPI-CENPK complex by targeting polysumoylated CENPI to proteasomal degradation. Regulates the cellular responses to hypoxia and heat shock through degradation of respectively EPAS1 and PARP1. Alternatively, it may also bind DNA/nucleosomes and have a more direct role in the regulation of transcription for instance enhancing basal transcription and steroid receptor-mediated transcriptional activation. Catalyzes ubiquitination of sumoylated PARP1 in response to PARP1 trapping to chromatin, leading to PARP1 removal from chromatin by VCP/p97. The protein is E3 ubiquitin-protein ligase RNF4 of Rattus norvegicus (Rat).